We begin with the raw amino-acid sequence, 335 residues long: Glyoxylate reductase (335 aa).

Residues 159–162 (MGRI), 181–183 (SRS), and 240–242 (TGR) each bind NADP(+). Active-site residues include Arg-242 and Glu-271. His-290 acts as the Proton donor in catalysis. 290–292 (HAA) contributes to the NADP(+) binding site.

The protein belongs to the D-isomer specific 2-hydroxyacid dehydrogenase family. GyaR subfamily. Homodimer.

It localises to the cytoplasm. The catalysed reaction is glycolate + NAD(+) = glyoxylate + NADH + H(+). In Aeropyrum pernix (strain ATCC 700893 / DSM 11879 / JCM 9820 / NBRC 100138 / K1), this protein is Glyoxylate reductase.